Reading from the N-terminus, the 1017-residue chain is MRRNVSDHAEKKDKVGVEVLLELPKTLSKSNKKWQLALIKLYCSRTLLNCAKHAIRKPGLFPRSLSYTAIDLDHHHGDDHFKIDTETLNDLVKNKNQEKLESLGGPNGLVSALKSNTRLGINEEGDEIQRRRSTFGSNTYTRQPSKGLFHFVVEAFKDLTILILLGCATLSLGFGIKEHGLKEGWYDGGSIFVAVFLVVAVSAVSNFRQNRQFDKLSKVSSNIKIDVVRNGRRQEISIFDIVVGDIVCLNIGDQVPADGVFVEGHLLHVDESSMTGESDHVEVSLTGNTFLFSGTKIADGFGKMAVTSVGMNTAWGQMMSHISRDTNEQTPLQSRLDKLTSSIGKVGLLVAFLVLLVLLIRYFTGTTKDESGNREYNGKTTKSDEIVNAVVKMVAAAVTIIVVAIPEGLPLAVTLTLAYSMKRMMKDNAMVRKLSACETMGSATVICTDKTGTLTLNQMKVTDFWFGLESGKASSVSQRVVELFHQGVAMNTTGSVFKAKAGTEYEFSGSPTEKAILSWAVEELEMGMEKVIEEHDVVHVEGFNSEKKRSGVLMKKKGVNTENNVVHWKGAAEKILAMCSTFCDGSGVVREMKEDDKIQFEKIIQSMAAKSLRCIAFAYSEDNEDNKKLKEEKLSLLGIIGIKDPCRPGVKKAVEDCQFAGVNIKMITGDNIFTARAIAVECGILTPEDEMNSEAVLEGEKFRNYTQEERLEKVERIKVMARSSPFDKLLMVKCLKELGHVVAVTGDGTNDAPALKEADIGLSMGIQGTEVAKESSDIVILDDNFASVATVLKWGRCVYNNIQKFIQFQLTVNVAALVINFVAAVSAGDVPLTAVQLLWVNLIMDTLGALALATEKPTNDLMKKKPIGRVAPLITNIMWRNLLAQAFYQISVLLVLQFRGRSIFNVTEKVKNTLIFNTFVLCQVFNEFNARSLEKKNVFKGLHKNRLFIGIIVVTVVLQVVMVEFLKRFADTERLNLGQWGVCIAIAAASWPIGWLVKSVPVPERHFFSYLKWKKRS.

At Met-1 the chain carries N-acetylmethionine. Residues 1–147 (MRRNVSDHAE…NTYTRQPSKG (147 aa)) lie on the Cytoplasmic side of the membrane. Residues 20–31 (LLELPKTLSKSN) form an interaction with calmodulin region. A helical transmembrane segment spans residues 148 to 168 (LFHFVVEAFKDLTILILLGCA). Residues 169–186 (TLSLGFGIKEHGLKEGWY) are Lumenal-facing. Residues 187-207 (DGGSIFVAVFLVVAVSAVSNF) traverse the membrane as a helical segment. Over 208-336 (RQNRQFDKLS…NEQTPLQSRL (129 aa)) the chain is Cytoplasmic. A helical membrane pass occupies residues 337-356 (DKLTSSIGKVGLLVAFLVLL). Residues 357 to 393 (VLLIRYFTGTTKDESGNREYNGKTTKSDEIVNAVVKM) lie on the Lumenal side of the membrane. A helical transmembrane segment spans residues 394 to 411 (VAAAVTIIVVAIPEGLPL). Residues 412-802 (AVTLTLAYSM…KWGRCVYNNI (391 aa)) are Cytoplasmic-facing. The active-site 4-aspartylphosphate intermediate is Asp-449. Asp-747 and Asp-751 together coordinate Mg(2+). A helical membrane pass occupies residues 803 to 821 (QKFIQFQLTVNVAALVINF). Over 822-832 (VAAVSAGDVPL) the chain is Lumenal. A helical transmembrane segment spans residues 833–853 (TAVQLLWVNLIMDTLGALALA). Residues 854–873 (TEKPTNDLMKKKPIGRVAPL) are Cytoplasmic-facing. A helical membrane pass occupies residues 874–896 (ITNIMWRNLLAQAFYQISVLLVL). Topologically, residues 897–905 (QFRGRSIFN) are lumenal. Residues 906 to 926 (VTEKVKNTLIFNTFVLCQVFN) form a helical membrane-spanning segment. Residues 927-944 (EFNARSLEKKNVFKGLHK) lie on the Cytoplasmic side of the membrane. A helical membrane pass occupies residues 945–966 (NRLFIGIIVVTVVLQVVMVEFL). Residues 967–976 (KRFADTERLN) lie on the Lumenal side of the membrane. Residues 977–998 (LGQWGVCIAIAAASWPIGWLVK) form a helical membrane-spanning segment. The Cytoplasmic portion of the chain corresponds to 999 to 1002 (SVPV).

The protein belongs to the cation transport ATPase (P-type) (TC 3.A.3) family. Type IIB subfamily.

The protein resides in the membrane. The catalysed reaction is Ca(2+)(in) + ATP + H2O = Ca(2+)(out) + ADP + phosphate + H(+). Its activity is regulated as follows. Activated by calmodulin. This magnesium-dependent enzyme catalyzes the hydrolysis of ATP coupled with the translocation of calcium from the cytosol out of the cell or into organelles. This is Putative calcium-transporting ATPase 13, plasma membrane-type (ACA13) from Arabidopsis thaliana (Mouse-ear cress).